Consider the following 124-residue polypeptide: Large ribosomal subunit protein bL21 (124 aa).

A disordered region spans residues N105 to E124.

Belongs to the bacterial ribosomal protein bL21 family. In terms of assembly, part of the 50S ribosomal subunit. Contacts protein L20.

In terms of biological role, this protein binds to 23S rRNA in the presence of protein L20. The protein is Large ribosomal subunit protein bL21 of Rhodopseudomonas palustris (strain BisA53).